We begin with the raw amino-acid sequence, 303 residues long: N-acetyl-D-glucosamine kinase (303 aa).

Residues 4 to 11 (GFDIGGTK) and 133 to 140 (GVGGGLIF) each bind ATP. 4 residues coordinate Zn(2+): H157, C177, C179, and C184.

It belongs to the ROK (NagC/XylR) family. NagK subfamily.

It carries out the reaction N-acetyl-D-glucosamine + ATP = N-acetyl-D-glucosamine 6-phosphate + ADP + H(+). It participates in cell wall biogenesis; peptidoglycan recycling. Catalyzes the phosphorylation of N-acetyl-D-glucosamine (GlcNAc) derived from cell-wall degradation, yielding GlcNAc-6-P. The sequence is that of N-acetyl-D-glucosamine kinase from Escherichia coli O9:H4 (strain HS).